Here is a 1609-residue protein sequence, read N- to C-terminus: Factor-induced gene 2 protein (1609 aa).

A signal peptide spans 1 to 22 (MNSFASLGLIYSVVNLLTRVEA). Asparagine 29 carries N-linked (GlcNAc...) asparagine glycosylation. 3 disordered regions span residues 129-165 (SSTL…SSTS), 196-243 (SSEI…EPLS), and 266-312 (TIPT…NYDV). Residues 137 to 148 (QPHRTSHSSSSF) show a composition bias toward polar residues. Residues 150 to 165 (LPVTAPSSSSLPSSTS) are compositionally biased toward low complexity. The span at 196–212 (SSEISGSTSPKSLESFD) shows a compositional bias: polar residues. 2 stretches are compositionally biased toward low complexity: residues 213–243 (TTGT…EPLS) and 274–285 (TSSLPPTLRSSS). The N-linked (GlcNAc...) asparagine glycan is linked to asparagine 231. Positions 286-312 (MAPTSGSDSISHNFTSPPSKTSGNYDV) are enriched in polar residues. Asparagine 298, asparagine 347, asparagine 386, asparagine 426, asparagine 495, asparagine 535, asparagine 661, asparagine 674, and asparagine 713 each carry an N-linked (GlcNAc...) asparagine glycan. Positions 846–876 (ATSEATSTSTQVSATSATATASESSTTSQVS) are disordered. Asparagine 889, asparagine 907, and asparagine 1079 each carry an N-linked (GlcNAc...) asparagine glycan. Over residues 1231 to 1243 (CTQDVPTQSSSPA) the composition is skewed to polar residues. The tract at residues 1231–1259 (CTQDVPTQSSSPASTLAYSPSVSTSSSSS) is disordered. Residues 1244 to 1259 (STLAYSPSVSTSSSSS) are compositionally biased toward low complexity. An N-linked (GlcNAc...) asparagine glycan is attached at asparagine 1400. Residue glycine 1588 is the site of GPI-anchor amidated glycine attachment. Residues 1589–1609 (SASKFLCSKFFMIMVMVINFI) constitute a propeptide, removed in mature form.

N-glycosylated.

It localises to the secreted. The protein resides in the cell wall. The protein localises to the membrane. Required for efficient mating. Plays a role in maintenance of cell wall integrity during mating. Important for mating cell projection shape and conjugation bridge diameter. Plays a role in cell fusion and nuclear migration. This chain is Factor-induced gene 2 protein (FIG2), found in Saccharomyces cerevisiae (strain ATCC 204508 / S288c) (Baker's yeast).